Here is a 222-residue protein sequence, read N- to C-terminus: Phosphoribosylformylglycinamidine synthase subunit PurQ (222 aa).

The 220-residue stretch at 3-222 (AAVVVFPGSN…RALTGALAAV (220 aa)) folds into the Glutamine amidotransferase type-1 domain. C86 (nucleophile) is an active-site residue. Active-site residues include H194 and E196.

Part of the FGAM synthase complex composed of 1 PurL, 1 PurQ and 2 PurS subunits.

The protein resides in the cytoplasm. It carries out the reaction N(2)-formyl-N(1)-(5-phospho-beta-D-ribosyl)glycinamide + L-glutamine + ATP + H2O = 2-formamido-N(1)-(5-O-phospho-beta-D-ribosyl)acetamidine + L-glutamate + ADP + phosphate + H(+). It catalyses the reaction L-glutamine + H2O = L-glutamate + NH4(+). It participates in purine metabolism; IMP biosynthesis via de novo pathway; 5-amino-1-(5-phospho-D-ribosyl)imidazole from N(2)-formyl-N(1)-(5-phospho-D-ribosyl)glycinamide: step 1/2. Its function is as follows. Part of the phosphoribosylformylglycinamidine synthase complex involved in the purines biosynthetic pathway. Catalyzes the ATP-dependent conversion of formylglycinamide ribonucleotide (FGAR) and glutamine to yield formylglycinamidine ribonucleotide (FGAM) and glutamate. The FGAM synthase complex is composed of three subunits. PurQ produces an ammonia molecule by converting glutamine to glutamate. PurL transfers the ammonia molecule to FGAR to form FGAM in an ATP-dependent manner. PurS interacts with PurQ and PurL and is thought to assist in the transfer of the ammonia molecule from PurQ to PurL. In Roseobacter denitrificans (strain ATCC 33942 / OCh 114) (Erythrobacter sp. (strain OCh 114)), this protein is Phosphoribosylformylglycinamidine synthase subunit PurQ.